The primary structure comprises 188 residues: Large ribosomal subunit protein eL18 (188 aa).

Lys119 is covalently cross-linked (Glycyl lysine isopeptide (Lys-Gly) (interchain with G-Cter in SUMO2)). Position 130 is a phosphoserine (Ser130). The interval 150–188 (RHFGKAPGTPHSHTKPYVRSKGRKFERARGRRASRGYKN) is disordered. The residue at position 158 (Thr158) is a Phosphothreonine. Composition is skewed to basic residues over residues 161 to 171 (SHTKPYVRSKG) and 178 to 188 (RGRRASRGYKN). Lys164 is covalently cross-linked (Glycyl lysine isopeptide (Lys-Gly) (interchain with G-Cter in SUMO2)).

This sequence belongs to the eukaryotic ribosomal protein eL18 family. As to quaternary structure, component of the large ribosomal subunit.

It is found in the cytoplasm. The protein resides in the cytosol. It localises to the rough endoplasmic reticulum. Component of the large ribosomal subunit. The ribosome is a large ribonucleoprotein complex responsible for the synthesis of proteins in the cell. In Mus musculus (Mouse), this protein is Large ribosomal subunit protein eL18 (Rpl18).